The primary structure comprises 223 residues: DNA mismatch repair protein MutH (223 aa).

This sequence belongs to the MutH family.

The protein localises to the cytoplasm. Sequence-specific endonuclease that cleaves unmethylated GATC sequences. It is involved in DNA mismatch repair. The sequence is that of DNA mismatch repair protein MutH from Shewanella baltica (strain OS223).